The following is a 216-amino-acid chain: Large ribosomal subunit protein uL3 (216 aa).

Belongs to the universal ribosomal protein uL3 family. In terms of assembly, part of the 50S ribosomal subunit. Forms a cluster with proteins L14 and L19.

Its function is as follows. One of the primary rRNA binding proteins, it binds directly near the 3'-end of the 23S rRNA, where it nucleates assembly of the 50S subunit. The sequence is that of Large ribosomal subunit protein uL3 from Symbiobacterium thermophilum (strain DSM 24528 / JCM 14929 / IAM 14863 / T).